A 119-amino-acid chain; its full sequence is Small ribosomal subunit protein eS25 (119 aa).

The tract at residues 1–42 (MPPKKDTKASAKQPQKTQKKKEGSGGGKAKKKKWSKGKVRDK) is disordered. The segment covering 28–37 (KAKKKKWSKG) has biased composition (basic residues).

This sequence belongs to the eukaryotic ribosomal protein eS25 family.

The chain is Small ribosomal subunit protein eS25 (RpS25) from Spodoptera frugiperda (Fall armyworm).